Reading from the N-terminus, the 244-residue chain is E3 ubiquitin-protein ligase RNF166 (244 aa).

The segment at 10 to 30 (AQRPQAPGPGPPRPPPPAGPA) is disordered. Residues 15 to 28 (APGPGPPRPPPPAG) are compositionally biased toward pro residues. An RING-type zinc finger spans residues 40-80 (CPICLEVFHRAVGIAGCGHTFCGECLQPCLQVPSPLCPLCR). Positions 105, 108, 120, and 124 each coordinate Zn(2+). A C2HC RNF-type zinc finger spans residues 105-124 (CRGCSKKVTLAKMRSHVSSC). The UIM domain occupies 228-244 (DEEAALQAALALSLSEN).

It localises to the cytoplasm. The catalysed reaction is S-ubiquitinyl-[E2 ubiquitin-conjugating enzyme]-L-cysteine + [acceptor protein]-L-lysine = [E2 ubiquitin-conjugating enzyme]-L-cysteine + N(6)-ubiquitinyl-[acceptor protein]-L-lysine.. The protein operates within protein modification; protein ubiquitination. Functionally, E3 ubiquitin-protein ligase that promotes the ubiquitination of different substrates. The sequence is that of E3 ubiquitin-protein ligase RNF166 (RNF166) from Gallus gallus (Chicken).